The primary structure comprises 712 residues: Polyribonucleotide nucleotidyltransferase (712 aa).

Mg(2+) is bound by residues Asp487 and Asp493. One can recognise a KH domain in the interval 554–613; it reads PKIITMTINPDKIRDVIGPSGKQINKIIEETGVKIDIEQDGTVFISSINQEMNDKAKKII. The S1 motif domain maps to 623–691; it reads GEIYEGKVKR…KQGRVNLSRK (69 aa).

It belongs to the polyribonucleotide nucleotidyltransferase family. It depends on Mg(2+) as a cofactor.

Its subcellular location is the cytoplasm. It catalyses the reaction RNA(n+1) + phosphate = RNA(n) + a ribonucleoside 5'-diphosphate. In terms of biological role, involved in mRNA degradation. Catalyzes the phosphorolysis of single-stranded polyribonucleotides processively in the 3'- to 5'-direction. The protein is Polyribonucleotide nucleotidyltransferase of Bacillus cereus (strain AH820).